Reading from the N-terminus, the 1357-residue chain is DNA-directed RNA polymerase subunit beta (1357 aa).

It belongs to the RNA polymerase beta chain family. As to quaternary structure, the RNAP catalytic core consists of 2 alpha, 1 beta, 1 beta' and 1 omega subunit. When a sigma factor is associated with the core the holoenzyme is formed, which can initiate transcription.

It carries out the reaction RNA(n) + a ribonucleoside 5'-triphosphate = RNA(n+1) + diphosphate. DNA-dependent RNA polymerase catalyzes the transcription of DNA into RNA using the four ribonucleoside triphosphates as substrates. The sequence is that of DNA-directed RNA polymerase subunit beta from Nitrosomonas europaea (strain ATCC 19718 / CIP 103999 / KCTC 2705 / NBRC 14298).